The chain runs to 531 residues: Chaperonin GroEL 2 (531 aa).

ATP contacts are provided by residues 30-33 (TLGP), 87-91 (DGTTT), glycine 414, and aspartate 494.

It belongs to the chaperonin (HSP60) family. As to quaternary structure, forms a cylinder of 14 subunits composed of two heptameric rings stacked back-to-back. Interacts with the co-chaperonin GroES.

The protein resides in the cytoplasm. The enzyme catalyses ATP + H2O + a folded polypeptide = ADP + phosphate + an unfolded polypeptide.. Functionally, together with its co-chaperonin GroES, plays an essential role in assisting protein folding. The GroEL-GroES system forms a nano-cage that allows encapsulation of the non-native substrate proteins and provides a physical environment optimized to promote and accelerate protein folding. The chain is Chaperonin GroEL 2 from Cutibacterium acnes (strain DSM 16379 / KPA171202) (Propionibacterium acnes).